Reading from the N-terminus, the 327-residue chain is Golgi to ER traffic protein 4 homolog (327 aa).

Ala2 carries the N-acetylalanine modification. Position 12 is a phosphoserine (Ser12). The interacts with BAG6 stretch occupies residues 195-271 (FVAQAVLQFL…YQPSLRRDPM (77 aa)). The disordered stretch occupies residues 307 to 327 (GSSEQEDGEESPSDGSPIELD).

This sequence belongs to the GET4 family. In terms of assembly, component of the BAG6/BAT3 complex, at least composed of BAG6, UBL4A and GET4/TRC35. Interacts with BAG6; the interaction is direct and localizes BAG6 to the cytosol. Interacts with GET3. Ubiquitinated by RNF12, leading to proteasomal degradation. When unassembled from BAG6; ubiquitinylation is modulated by BAG6 quality control role and effectuated by RNF126.

It localises to the cytoplasm. The protein resides in the cytosol. As part of a cytosolic protein quality control complex, the BAG6/BAT3 complex, maintains misfolded and hydrophobic patches-containing proteins in a soluble state and participates in their proper delivery to the endoplasmic reticulum or alternatively can promote their sorting to the proteasome where they undergo degradation. The BAG6/BAT3 complex is involved in the post-translational delivery of tail-anchored/type II transmembrane proteins to the endoplasmic reticulum membrane. Recruited to ribosomes, it interacts with the transmembrane region of newly synthesized tail-anchored proteins and together with SGTA and ASNA1 mediates their delivery to the endoplasmic reticulum. Client proteins that cannot be properly delivered to the endoplasmic reticulum are ubiquitinated and sorted to the proteasome. Similarly, the BAG6/BAT3 complex also functions as a sorting platform for proteins of the secretory pathway that are mislocalized to the cytosol either delivering them to the proteasome for degradation or to the endoplasmic reticulum. The BAG6/BAT3 complex also plays a role in the endoplasmic reticulum-associated degradation (ERAD), a quality control mechanism that eliminates unwanted proteins of the endoplasmic reticulum through their retrotranslocation to the cytosol and their targeting to the proteasome. It maintains these retrotranslocated proteins in an unfolded yet soluble state condition in the cytosol to ensure their proper delivery to the proteasome. This chain is Golgi to ER traffic protein 4 homolog, found in Homo sapiens (Human).